A 346-amino-acid chain; its full sequence is Tryptophan--tRNA ligase (346 aa).

Residues 10 to 12 (QAS) and 18 to 19 (GN) contribute to the ATP site. A 'HIGH' region motif is present at residues 11-19 (ASGKQHLGN). Residue Asp140 participates in L-tryptophan binding. ATP is bound by residues 152–154 (GND), Ile191, and 200–204 (KMSKS). The 'KMSKS' region motif lies at 200 to 204 (KMSKS).

It belongs to the class-I aminoacyl-tRNA synthetase family. Homodimer.

Its subcellular location is the cytoplasm. The catalysed reaction is tRNA(Trp) + L-tryptophan + ATP = L-tryptophyl-tRNA(Trp) + AMP + diphosphate + H(+). In terms of biological role, catalyzes the attachment of tryptophan to tRNA(Trp). The chain is Tryptophan--tRNA ligase from Mycoplasma pneumoniae (strain ATCC 29342 / M129 / Subtype 1) (Mycoplasmoides pneumoniae).